Here is a 483-residue protein sequence, read N- to C-terminus: Nucleolar protein 4 (483 aa).

2 disordered regions span residues 210 to 418 and 435 to 483; these read QQDE…PIPS and SESR…DPQI. Residues 211 to 225 are compositionally biased toward acidic residues; that stretch reads QDEDESSIESDEFDM. Composition is skewed to polar residues over residues 229-254, 262-271, and 302-317; these read TRMS…TVHG, AESSNGNETL, and QPLN…QLTS. 2 stretches are compositionally biased toward basic and acidic residues: residues 319-330 and 340-350; these read FRIDDQGSDGKN and LKMEREARENG. Over residues 351-363 the composition is skewed to polar residues; sequence SKSPAHSYSSYDS. Basic and acidic residues-rich tracts occupy residues 364–374, 391–409, and 435–451; these read GKNESVDRGAE, HEDS…ERLK, and SESR…KAQD. The span at 467–483 shows a compositional bias: polar residues; it reads ATYSTATVPGSQEDPQI.

It is found in the nucleus. The protein localises to the nucleolus. This is Nucleolar protein 4 (Nol4) from Mus musculus (Mouse).